The sequence spans 192 residues: Probable thymidylate kinase (192 aa).

8-15 (GIDGSGKS) contributes to the ATP binding site.

It belongs to the thymidylate kinase family.

It catalyses the reaction dTMP + ATP = dTDP + ADP. This chain is Probable thymidylate kinase, found in Pyrobaculum aerophilum (strain ATCC 51768 / DSM 7523 / JCM 9630 / CIP 104966 / NBRC 100827 / IM2).